We begin with the raw amino-acid sequence, 126 residues long: Fluoride-specific ion channel FluC (126 aa).

4 consecutive transmembrane segments (helical) span residues 6 to 26 (FLAVGVGAALGAWLRWALAIL), 36 to 56 (YGTLAANLVGGYLIGVAVGFF), 69 to 89 (LVITGFLGGLTTFSTFSGEVV), and 99 to 119 (IGVLHIVAHLGGSLFLTMLGF). Glycine 76 and threonine 79 together coordinate Na(+).

Belongs to the fluoride channel Fluc/FEX (TC 1.A.43) family.

Its subcellular location is the cell inner membrane. It carries out the reaction fluoride(in) = fluoride(out). Na(+) is not transported, but it plays an essential structural role and its presence is essential for fluoride channel function. Its function is as follows. Fluoride-specific ion channel. Important for reducing fluoride concentration in the cell, thus reducing its toxicity. This Ralstonia pickettii (strain 12J) protein is Fluoride-specific ion channel FluC.